Here is a 623-residue protein sequence, read N- to C-terminus: DNA polymerase alpha subunit B (623 aa).

The interval 113–151 is disordered; that stretch reads IPKIKDEPSSSVDVSTARNKNNHNNNNNNNPSLPNKSMF. A compositionally biased stretch (polar residues) spans 121–130; the sequence is SSSVDVSTAR.

This sequence belongs to the DNA polymerase alpha subunit B family. As to quaternary structure, DNA polymerase alpha:primase is a four subunit enzyme complex, which is assembled throughout the cell cycle, and consists of the two DNA polymerase subunits A and B, and the DNA primase large and small subunits. Subunit B binds to subunit A.

The protein localises to the nucleus. Functionally, may play an essential role at the early stage of chromosomal DNA replication by coupling the polymerase alpha/primase complex to the cellular replication machinery. The polypeptide is DNA polymerase alpha subunit B (polA2) (Dictyostelium discoideum (Social amoeba)).